A 386-amino-acid chain; its full sequence is Prostacyclin receptor (386 aa).

Residues 1–16 are Extracellular-facing; it reads MADSCRNLTYVRGSVG. 2 disulfides stabilise this stretch: cysteine 5-cysteine 165 and cysteine 92-cysteine 170. Residue asparagine 7 is glycosylated (N-linked (GlcNAc...) asparagine). The chain crosses the membrane as a helical span at residues 17-38; that stretch reads PATSTLMFVAGVVGNGLALGIL. The Cytoplasmic segment spans residues 39–51; sequence SARRPARPSAFAV. Residues 52–76 traverse the membrane as a helical segment; that stretch reads LVTGLAATDLLGTSFLSPAVFVAYA. The Extracellular segment spans residues 77-94; sequence RNSSLLGLARGGPALCDA. A helical membrane pass occupies residues 95–115; the sequence is FAFAMTFFGLASMLILFAMAV. Residues 116–134 lie on the Cytoplasmic side of the membrane; the sequence is ERCLALSHPYLYAQLDGPR. A helical membrane pass occupies residues 135–158; the sequence is CARLALPAIYAFCVLFCALPLLGL. The Extracellular portion of the chain corresponds to 159 to 181; that stretch reads GQHQQYCPGSWCFLRMRWAQPGG. Residues 182-208 traverse the membrane as a helical segment; that stretch reads AAFSLAYAGLVALLVAAIFLCNGSVTL. The Cytoplasmic portion of the chain corresponds to 209 to 235; the sequence is SLCRMYRQQKRHQGSLGPRPRTGEDEV. A helical transmembrane segment spans residues 236–260; it reads DHLILLALMTVVMAVCSLPLTIRCF. Residues 261–274 lie on the Extracellular side of the membrane; the sequence is TQAVAPDSSSEMGD. The helical transmembrane segment at 275–295 threads the bilayer; it reads LLAFRFYAFNPILDPWVFILF. Residues 296–386 lie on the Cytoplasmic side of the membrane; the sequence is RKAVFQRLKL…AEASVACSLC (91 aa). The disordered stretch occupies residues 322–376; it reads PLSQLASGRRDPRAPSAPVGKEGSCVPLSAWGEGQVEPLPPTQQSSGSAVGTSSK. Positions 363–376 are enriched in polar residues; that stretch reads TQQSSGSAVGTSSK. Cysteine 383 carries the cysteine methyl ester modification. Cysteine 383 carries S-farnesyl cysteine lipidation. A propeptide spans 384-386 (removed in mature form); it reads SLC.

It belongs to the G-protein coupled receptor 1 family. In terms of assembly, interacts (non-isoprenylated C-terminus) with PDZK1. In terms of processing, isoprenylation does not influence ligand binding but is required for efficient coupling to the effectors adenylyl cyclase and phospholipase C.

It is found in the cell membrane. In terms of biological role, receptor for prostacyclin (prostaglandin I2 or PGI2). The activity of this receptor is mediated by G(s) proteins which activate adenylate cyclase. This chain is Prostacyclin receptor (PTGIR), found in Homo sapiens (Human).